We begin with the raw amino-acid sequence, 664 residues long: NADH-ubiquinone oxidoreductase chain 5 (664 aa).

Transmembrane regions (helical) follow at residues 2-22 (LLLT…LFGF), 28-48 (GSVF…LIII), 77-97 (FLFD…STLV), 120-140 (LFTF…MFVG), 168-188 (AMLV…TIFY), 210-230 (FIFF…IFIG), 250-270 (GPTP…GVYL), 285-305 (LKII…VGLV), 321-341 (LGYM…FHLS), 342-362 (NHAY…HAMG), 376-396 (ILPF…GFPF), 424-444 (LGTI…FFAF), 462-482 (PLEM…IGYI), 521-541 (LPVI…FFKF), 590-610 (IDKG…FSFL), 614-634 (IILL…ISTI), and 639-659 (IIFF…FLFI).

It belongs to the complex I subunit 5 family.

The protein resides in the mitochondrion inner membrane. It catalyses the reaction a ubiquinone + NADH + 5 H(+)(in) = a ubiquinol + NAD(+) + 4 H(+)(out). Its function is as follows. Core subunit of the mitochondrial membrane respiratory chain NADH dehydrogenase (Complex I) that is believed to belong to the minimal assembly required for catalysis. Complex I functions in the transfer of electrons from NADH to the respiratory chain. The immediate electron acceptor for the enzyme is believed to be ubiquinone. In Phytophthora infestans (Potato late blight agent), this protein is NADH-ubiquinone oxidoreductase chain 5 (ND5).